The primary structure comprises 252 residues: Enolase-phosphatase E1 (252 aa).

Residues Asp-14 and Glu-16 each contribute to the Mg(2+) site. Substrate contacts are provided by residues 143-144 (SS) and Lys-177. Asp-202 provides a ligand contact to Mg(2+).

The protein belongs to the HAD-like hydrolase superfamily. MasA/MtnC family. Monomer. Requires Mg(2+) as cofactor.

The protein localises to the cytoplasm. The protein resides in the nucleus. It catalyses the reaction 5-methylsulfanyl-2,3-dioxopentyl phosphate + H2O = 1,2-dihydroxy-5-(methylsulfanyl)pent-1-en-3-one + phosphate. Its pathway is amino-acid biosynthesis; L-methionine biosynthesis via salvage pathway; L-methionine from S-methyl-5-thio-alpha-D-ribose 1-phosphate: step 3/6. It functions in the pathway amino-acid biosynthesis; L-methionine biosynthesis via salvage pathway; L-methionine from S-methyl-5-thio-alpha-D-ribose 1-phosphate: step 4/6. In terms of biological role, bifunctional enzyme that catalyzes the enolization of 2,3-diketo-5-methylthiopentyl-1-phosphate (DK-MTP-1-P) into the intermediate 2-hydroxy-3-keto-5-methylthiopentenyl-1-phosphate (HK-MTPenyl-1-P), which is then dephosphorylated to form the acireductone 1,2-dihydroxy-3-keto-5-methylthiopentene (DHK-MTPene). This chain is Enolase-phosphatase E1, found in Drosophila persimilis (Fruit fly).